The following is a 184-amino-acid chain: Glutathione-regulated potassium-efflux system ancillary protein KefG (184 aa).

This sequence belongs to the NAD(P)H dehydrogenase (quinone) family. KefG subfamily. Interacts with KefB.

Its subcellular location is the cell inner membrane. The enzyme catalyses a quinone + NADH + H(+) = a quinol + NAD(+). The catalysed reaction is a quinone + NADPH + H(+) = a quinol + NADP(+). Functionally, regulatory subunit of a potassium efflux system that confers protection against electrophiles. Required for full activity of KefB. The polypeptide is Glutathione-regulated potassium-efflux system ancillary protein KefG (Cronobacter sakazakii (strain ATCC BAA-894) (Enterobacter sakazakii)).